We begin with the raw amino-acid sequence, 418 residues long: Cyclin-A1 (418 aa).

The protein belongs to the cyclin family. Cyclin AB subfamily. Interacts with the CDK1 and the CDK2 protein kinases to form a serine/threonine kinase holoenzyme complex. The cyclin subunit imparts substrate specificity to the complex.

It localises to the nucleus. Its function is as follows. May be involved in the control of the cell cycle at the G1/S (start) and G2/M (mitosis) transitions. The polypeptide is Cyclin-A1 (ccna1) (Xenopus laevis (African clawed frog)).